We begin with the raw amino-acid sequence, 374 residues long: Anhydro-N-acetylmuramic acid kinase (374 aa).

12 to 19 (GTSLDGID) provides a ligand contact to ATP.

Belongs to the anhydro-N-acetylmuramic acid kinase family.

The enzyme catalyses 1,6-anhydro-N-acetyl-beta-muramate + ATP + H2O = N-acetyl-D-muramate 6-phosphate + ADP + H(+). It functions in the pathway amino-sugar metabolism; 1,6-anhydro-N-acetylmuramate degradation. It participates in cell wall biogenesis; peptidoglycan recycling. Catalyzes the specific phosphorylation of 1,6-anhydro-N-acetylmuramic acid (anhMurNAc) with the simultaneous cleavage of the 1,6-anhydro ring, generating MurNAc-6-P. Is required for the utilization of anhMurNAc either imported from the medium or derived from its own cell wall murein, and thus plays a role in cell wall recycling. This Klebsiella pneumoniae subsp. pneumoniae (strain ATCC 700721 / MGH 78578) protein is Anhydro-N-acetylmuramic acid kinase.